Here is a 460-residue protein sequence, read N- to C-terminus: DL-alanine permease SerP2 (460 aa).

The next 12 helical transmembrane spans lie at 26 to 46, 47 to 67, 98 to 118, 124 to 144, 160 to 180, 209 to 229, 246 to 266, 278 to 298, 344 to 364, 368 to 388, 410 to 430, and 433 to 453; these read LIAIAGTIGTGLFLGAGKSIH, LTGPSIIFVYLIIGALMYILL, FIQWSYLLVVVFVAMAELIAI, FWLPDLPIWMTEVFVLVLLTL, FGMIKIVAIIGLILTAIILIF, FFESFQMVMFAFVSMEFIGMT, QIPIRIVLFYIGALLAIMSIY, FVTIFQLIGIKWAAALVNFVV, ALLFTSLLILFTPFISMIPAI, FVFITSVATNLFLVVYLMTLI, HIFIPLAIAGFVLIFISLFCF, and TIIPAIGSVIWVLIFGLFTFF.

It belongs to the amino acid-polyamine-organocation (APC) superfamily. Amino acid transporter (AAT) (TC 2.A.3.1) family.

Its subcellular location is the cell membrane. Functionally, transports DL-alanine, DL-serine and glycine. The preferred substrate is DL-alanine. L-serine is a low-affinity substrate. The polypeptide is DL-alanine permease SerP2 (Lactococcus lactis subsp. cremoris (strain MG1363)).